Here is a 162-residue protein sequence, read N- to C-terminus: Interleukin-15 (162 aa).

Residues 1–29 (MRILKPYLRSTSIQCYLCLLLNSHFLTEA) form the signal peptide. Residues 30–48 (CIPVFILSCINAGLPKTEA) constitute a propeptide that is removed on maturation. Intrachain disulfides connect Cys83-Cys133 and Cys90-Cys136. 2 N-linked (GlcNAc...) asparagine glycosylation sites follow: Asn104 and Asn127.

Belongs to the IL-15/IL-21 family.

It localises to the secreted. Cytokine that plays a major role in the development of inflammatory and protective immune responses to microbial invaders and parasites by modulating immune cells of both the innate and adaptive immune systems. Stimulates the proliferation of natural killer cells, T-cells and B-cells and promotes the secretion of several cytokines. In monocytes, induces the production of IL8 and monocyte chemotactic protein 1/CCL2, two chemokines that attract neutrophils and monocytes respectively to sites of infection. Unlike most cytokines, which are secreted in soluble form, IL15 is expressed in association with its high affinity IL15RA on the surface of IL15-producing cells and delivers signals to target cells that express IL2RB and IL2RG receptor subunits. Binding to its receptor triggers the phosphorylation of JAK1 and JAK3 and the recruitment and subsequent phosphorylation of signal transducer and activator of transcription-3/STAT3 and STAT5. In mast cells, induces the rapid tyrosine phosphorylation of STAT6 and thereby controls mast cell survival and release of cytokines such as IL4. This chain is Interleukin-15 (IL15), found in Felis catus (Cat).